The primary structure comprises 240 residues: Small ribosomal subunit protein uS3 (240 aa).

In terms of domain architecture, KH type-2 spans 21-92; the sequence is LNEFFTRELA…TIVLYAERVQ (72 aa). Phosphothreonine is present on residues Thr-44 and Thr-70. Residue Ser-97 is modified to Phosphoserine. A Glycyl lysine isopeptide (Lys-Gly) (interchain with G-Cter in ubiquitin) cross-link involves residue Lys-106. Position 129 is a phosphoserine (Ser-129). Residues Lys-132 and Lys-141 each participate in a glycyl lysine isopeptide (Lys-Gly) (interchain with G-Cter in ubiquitin) cross-link. Arg-146 bears the Omega-N-methylarginine; by SFM1 mark. Glycyl lysine isopeptide (Lys-Gly) (interchain with G-Cter in ubiquitin) cross-links involve residues Lys-151, Lys-200, and Lys-212. Residues 212–240 form a disordered region; the sequence is KEEEPILAPSVKDYRPAEETEAQAEPVEA. Ser-221 is subject to Phosphoserine. The segment covering 230–240 has biased composition (acidic residues); the sequence is ETEAQAEPVEA. Thr-231 carries the phosphothreonine modification.

The protein belongs to the universal ribosomal protein uS3 family. As to quaternary structure, component of the small ribosomal subunit (SSU). Mature yeast ribosomes consist of a small (40S) and a large (60S) subunit. The 40S small subunit contains 1 molecule of ribosomal RNA (18S rRNA) and 33 different proteins (encoded by 57 genes). The large 60S subunit contains 3 rRNA molecules (25S, 5.8S and 5S rRNA) and 46 different proteins (encoded by 81 genes). Post-translationally, ubiquitinated at Lys-212 in response to stalled ribosomes. Ubiquitination leads to activation of the No-Go Decay (NGD) pathway and degradation of non-functional 18S rRNA: first monoubiquitinated at Lys-212 by MAG2, followed by formation of 'Lys-63'-linked polyubiquitin chains on monoubiquitin by HEL2 and RSP5.

Its subcellular location is the cytoplasm. Its function is as follows. Component of the ribosome, a large ribonucleoprotein complex responsible for the synthesis of proteins in the cell. The small ribosomal subunit (SSU) binds messenger RNAs (mRNAs) and translates the encoded message by selecting cognate aminoacyl-transfer RNA (tRNA) molecules. The large subunit (LSU) contains the ribosomal catalytic site termed the peptidyl transferase center (PTC), which catalyzes the formation of peptide bonds, thereby polymerizing the amino acids delivered by tRNAs into a polypeptide chain. The nascent polypeptides leave the ribosome through a tunnel in the LSU and interact with protein factors that function in enzymatic processing, targeting, and the membrane insertion of nascent chains at the exit of the ribosomal tunnel. The protein is Small ribosomal subunit protein uS3 of Saccharomyces cerevisiae (strain ATCC 204508 / S288c) (Baker's yeast).